The sequence spans 489 residues: Toxin coregulated pilus biosynthesis outer membrane protein C (489 aa).

Positions 1-16 (MKKTIISTLVIGLVSG) are cleaved as a signal peptide. A lipid anchor (N-palmitoyl cysteine) is attached at C17. C17 carries the S-diacylglycerol cysteine lipid modification. 4 consecutive transmembrane segments (helical) span residues 174 to 190 (FSSS…SSGL), 294 to 308 (AISL…GASY), 402 to 417 (QLVS…LPTV), and 442 to 457 (NYIQ…GGGT).

The protein localises to the cell membrane. Involved in TCP pilus biogenesis. This chain is Toxin coregulated pilus biosynthesis outer membrane protein C (tcpC), found in Vibrio cholerae serotype O1 (strain ATCC 39315 / El Tor Inaba N16961).